A 206-amino-acid polypeptide reads, in one-letter code: Small ribosomal subunit protein uS3 (206 aa).

Residues 39–107 (IRSYINESFK…SVEVNVVGIK (69 aa)) enclose the KH type-2 domain.

The protein belongs to the universal ribosomal protein uS3 family. Part of the 30S ribosomal subunit. Forms a tight complex with proteins S10 and S14.

In terms of biological role, binds the lower part of the 30S subunit head. Binds mRNA in the 70S ribosome, positioning it for translation. The polypeptide is Small ribosomal subunit protein uS3 (Wolbachia sp. subsp. Brugia malayi (strain TRS)).